The primary structure comprises 675 residues: MANLPIQHASLSWNAQGTPVSQQFDDVYFSNQDGLAETRYVFLQGNQFPERFGTHPRTACVIAETGFGTGLNFLTLWQAFAHFRQQQPQATLRHLHFISFEKFPLRQHDLAAAHAQWPELAEFADELRQQWPLALPGCHRLILAQGSITLDLWFGDVNVILPELDDTQNHQVDAWFLDGFAPSKNPDMWTDNLFQAMARLCRKEGTFATFTAAGFVRRGLQQAGFHVSKVKGFGQKREMLSGLLPDTLPITSPTPWYSRPAASTTDDIAIIGGGIASVLTALALQRRGANVTLYCAESQPATGASGNRQGALYPLLNNRHDAVSRFFSLAFDFAHRSYSALAQQGLEFEHQWCGVSQLAWDEKSARKIEQILQGEWPEELVVSVDAQQLEKQSGLNPGVNGITYPDGGWLCPAELTAAALKLAQQNGLSVQMSTAVSALEKTDSGWALTLSAGQQVNHAVVVLANGHHITDWPQTRHLPGYAVRGQVSHIPTNPVLGQLKHVLCYDGYLTPVSPQHQTHCIGASYLRGQAHGDYREEEQQENRQRLLNCLPNADWAKTVDISDAQARQGVRCALRDHLPLIGAVPNYEQTLKEYENRLHPQHRADTVSSAPYWQDLFIIGALGSRGLCSAPLAAEILASQMYAEPLPLDRDTLAALNPNRFWIRKLLKGKPVTHD.

Residues Met-1 to Pro-245 form a tRNA (mnm(5)s(2)U34)-methyltransferase region. Residues Ile-271–Asp-675 are FAD-dependent cmnm(5)s(2)U34 oxidoreductase.

In the N-terminal section; belongs to the methyltransferase superfamily. tRNA (mnm(5)s(2)U34)-methyltransferase family. This sequence in the C-terminal section; belongs to the DAO family. The cofactor is FAD.

It localises to the cytoplasm. It carries out the reaction 5-aminomethyl-2-thiouridine(34) in tRNA + S-adenosyl-L-methionine = 5-methylaminomethyl-2-thiouridine(34) in tRNA + S-adenosyl-L-homocysteine + H(+). In terms of biological role, catalyzes the last two steps in the biosynthesis of 5-methylaminomethyl-2-thiouridine (mnm(5)s(2)U) at the wobble position (U34) in tRNA. Catalyzes the FAD-dependent demodification of cmnm(5)s(2)U34 to nm(5)s(2)U34, followed by the transfer of a methyl group from S-adenosyl-L-methionine to nm(5)s(2)U34, to form mnm(5)s(2)U34. This Pectobacterium atrosepticum (strain SCRI 1043 / ATCC BAA-672) (Erwinia carotovora subsp. atroseptica) protein is tRNA 5-methylaminomethyl-2-thiouridine biosynthesis bifunctional protein MnmC.